We begin with the raw amino-acid sequence, 564 residues long: Membrane protein insertase YidC (564 aa).

Residues 7 to 24 traverse the membrane as a helical segment; sequence VLWVVFSFSLLMLWDNYN. The span at 43 to 60 shows a compositional bias: low complexity; the sequence is KPAAATDDGKTAAAPTAD. The interval 43–76 is disordered; sequence KPAAATDDGKTAAAPTADVPTSSAHAANATGVPD. 6 consecutive transmembrane segments (helical) span residues 293–313, 341–361, 364–384, 438–458, 483–503, and 524–544; these read LATNLYAVGAIMPMGAVAPGA, VKDYGWLTIIAKPIFWLMIQI, LLGNWGWTIVVLTIVIKLAFF, MPIVIQIPVFISLYWVLLASV, IGSFHLTIGILPILMAISMFI, and PIAFSLMFFFFPAGLVLYWVV.

It belongs to the OXA1/ALB3/YidC family. Type 1 subfamily. As to quaternary structure, interacts with the Sec translocase complex via SecD. Specifically interacts with transmembrane segments of nascent integral membrane proteins during membrane integration.

The protein localises to the cell inner membrane. In terms of biological role, required for the insertion and/or proper folding and/or complex formation of integral membrane proteins into the membrane. Involved in integration of membrane proteins that insert both dependently and independently of the Sec translocase complex, as well as at least some lipoproteins. Aids folding of multispanning membrane proteins. The sequence is that of Membrane protein insertase YidC from Janthinobacterium sp. (strain Marseille) (Minibacterium massiliensis).